Reading from the N-terminus, the 142-residue chain is Large ribosomal subunit protein uL11 (142 aa).

It belongs to the universal ribosomal protein uL11 family. In terms of assembly, part of the ribosomal stalk of the 50S ribosomal subunit. Interacts with L10 and the large rRNA to form the base of the stalk. L10 forms an elongated spine to which L12 dimers bind in a sequential fashion forming a multimeric L10(L12)X complex. In terms of processing, one or more lysine residues are methylated.

Its function is as follows. Forms part of the ribosomal stalk which helps the ribosome interact with GTP-bound translation factors. The chain is Large ribosomal subunit protein uL11 from Yersinia pestis bv. Antiqua (strain Angola).